The following is an 814-amino-acid chain: E3 ubiquitin-protein ligase TRIM71 (814 aa).

The RING-type zinc finger occupies 12-76 (CPLCKEMCVS…SLQLRCPVCD (65 aa)). Residues 111-146 (QQQSNGGRTASNRQRSASCSSSGLLRRAPPSQSEPR) are disordered. The span at 120-138 (ASNRQRSASCSSSGLLRRA) shows a compositional bias: low complexity. The segment at 142–189 (QSEPRCSSCDDGNGASSHCLDCQENLCDNCLRAHQRVRLTKDHFIERF) adopts a B box-type 1; atypical zinc-finger fold. 8 residues coordinate Zn(2+): Cys147, Cys150, Cys171, His175, Cys224, His227, Cys247, and His252. Residues 219 to 260 (PERLYCQQHDEEVLHFYCDSCSVPICRECTMGRHAGHSFVYL) form a B box-type 2 zinc finger. Positions 282-370 (RQAIQLSLEQ…INAVQQVLEE (89 aa)) form a coiled coil. The Filamin repeat unit spans residues 425–526 (SSGAFAALTK…IENSPFKVNV (102 aa)). NHL repeat units lie at residues 539–582 (TLSF…FKPC), 586–629 (HHKF…FTFE), 633–676 (LLKF…FGPD), 680–723 (LNKY…IKPD), 727–770 (AHFL…FEPN), and 774–814 (LCKF…ILAF).

It belongs to the TRIM/RBCC family.

The protein resides in the cytoplasm. It is found in the P-body. The enzyme catalyses S-ubiquitinyl-[E2 ubiquitin-conjugating enzyme]-L-cysteine + [acceptor protein]-L-lysine = [E2 ubiquitin-conjugating enzyme]-L-cysteine + N(6)-ubiquitinyl-[acceptor protein]-L-lysine.. Its pathway is protein modification; protein ubiquitination. Functionally, E3 ubiquitin-protein ligase that cooperates with the microRNAs (miRNAs) machinery and promotes embryonic stem cells proliferation and maintenance. Binds to miRNAs and participates in post-transcriptional repression of transcripts. Required to maintain proliferation and prevent premature differentiation of neural progenitor cells during early neural development. This Xenopus tropicalis (Western clawed frog) protein is E3 ubiquitin-protein ligase TRIM71 (trim71).